A 47-amino-acid polypeptide reads, in one-letter code: Heat shock protein HSP 90 (47 aa).

Belongs to the heat shock protein 90 family. Homodimer.

It is found in the cytoplasm. Its function is as follows. Putative molecular chaperone that may promote the maturation, structural maintenance and proper regulation of specific target proteins. The polypeptide is Heat shock protein HSP 90 (Oryctolagus cuniculus (Rabbit)).